We begin with the raw amino-acid sequence, 90 residues long: Small ribosomal subunit protein bS20 (90 aa).

The disordered stretch occupies residues 1–29; the sequence is MANTASAEKRNRQAQKRRARNVQVRTGVK.

The protein belongs to the bacterial ribosomal protein bS20 family.

In terms of biological role, binds directly to 16S ribosomal RNA. The chain is Small ribosomal subunit protein bS20 from Anaeromyxobacter sp. (strain Fw109-5).